Consider the following 165-residue polypeptide: Small ribosomal subunit protein uS5 (165 aa).

An S5 DRBM domain is found at L13–I76.

The protein belongs to the universal ribosomal protein uS5 family. Part of the 30S ribosomal subunit. Contacts proteins S4 and S8.

With S4 and S12 plays an important role in translational accuracy. Its function is as follows. Located at the back of the 30S subunit body where it stabilizes the conformation of the head with respect to the body. The protein is Small ribosomal subunit protein uS5 of Chlamydia muridarum (strain MoPn / Nigg).